A 551-amino-acid polypeptide reads, in one-letter code: BAG family molecular chaperone regulator 8, chloroplastic (551 aa).

Over residues 1 to 19 (MASHHHHNHNHVCSRHQNH) the composition is skewed to basic residues. A disordered region spans residues 1–46 (MASHHHHNHNHVCSRHQNHHNNTPQFATSPNCCNKSNHPSPPPAED). Residues 1-52 (MASHHHHNHNHVCSRHQNHHNNTPQFATSPNCCNKSNHPSPPPAEDNLLHLV) constitute a chloroplast transit peptide. Positions 20–38 (HNNTPQFATSPNCCNKSNH) are enriched in polar residues. The IQ domain maps to 131–160 (RDSAARVIQTHFRSYLVHRSISFRQLKELA). The 82-residue stretch at 147-228 (VHRSISFRQL…RFVQYVDDCV (82 aa)) folds into the BAG domain. Positions 246-281 (GKKPQGFGTSSEDEDNNADMSDDSEEVPVSSIDKRK) are disordered. Acidic residues predominate over residues 256 to 271 (SEDEDNNADMSDDSEE). The residue at position 332 (serine 332) is a Phosphoserine. Disordered stretches follow at residues 414–433 (DEGKRRSSKTGSRVLVKGSG) and 450–551 (NVYK…KMEP). A compositionally biased stretch (basic and acidic residues) spans 479-499 (GEEKGNVNEVEEIKYVPKENE). Positions 500-513 (SFEEEEEKETDSEN) are enriched in acidic residues. The span at 522–534 (EGDKRVTKKEVQH) shows a compositional bias: basic and acidic residues.

Binds to the ATPase domain of HSP70/HSC70 chaperones.

The protein localises to the plastid. Its subcellular location is the chloroplast. Functionally, co-chaperone that regulates diverse cellular pathways, such as programmed cell death and stress responses. The sequence is that of BAG family molecular chaperone regulator 8, chloroplastic (BAG1) from Arabidopsis thaliana (Mouse-ear cress).